A 793-amino-acid chain; its full sequence is Meiosis-specific protein ASY3 (793 aa).

Disordered stretches follow at residues 1-40 (MSDYRSFGSNYHPSSQSRKISIGVMADSQPKRNLVPDKDD), 58-97 (LQANKKEKSDLAAKQRNSAQVTGHVTSPWRSPRSSHRKLG), 110-287 (LSGS…KAGA), and 305-586 (EGLR…KRNS). A compositionally biased stretch (polar residues) spans 7–19 (FGSNYHPSSQSRK). The segment covering 60–70 (ANKKEKSDLAA) has biased composition (basic and acidic residues). Over residues 72–86 (QRNSAQVTGHVTSPW) the composition is skewed to polar residues. Residues 110–122 (LSGSKGLNKGLNG) are compositionally biased toward low complexity. A compositionally biased stretch (polar residues) spans 131–142 (SFQNCPISSPQH). Composition is skewed to basic and acidic residues over residues 151–165 (RNDRVMDRSPERMEE) and 177–187 (SQREKMDKPGK). The segment covering 209–219 (PANNEDVNSET) has biased composition (polar residues). Over residues 221 to 248 (EVEKTNFKLSQDKGSNDDPLIKPRHNSD) the composition is skewed to basic and acidic residues. A compositionally biased stretch (basic residues) spans 322–341 (KKQRGRRKNTVVKCRKAHSR). Basic and acidic residues-rich tracts occupy residues 342 to 354 (KKDEADWSRKEAS), 363 to 385 (ESTETGKRSSSSDKKGSSHDLHP), 392 to 407 (QKPDISTREGDFHPSP), and 424 to 441 (NGDKHERPSNIFREKSVE). 2 stretches are compositionally biased toward low complexity: residues 455 to 470 (APISSPSPCCSPEASP) and 491 to 502 (GTKKTSQGTTGQ). Basic and acidic residues-rich tracts occupy residues 505–527 (DTEKRLPDFLEKKRDYSFRRESS) and 541–553 (SDERDSDGSREDS). Residues 682–745 (SNLAKTKRKH…KGSIKKQRTS (64 aa)) adopt a coiled-coil conformation.

Interacts with ASY1.

It is found in the chromosome. It localises to the nucleus. Its function is as follows. Required for normal meiosis in male and female gametophytes. Acts with ASY1 at the interface between the developing chromosome axes and the recombination machinery to ensure interhomolog recombination. Required for synaptonemal complex formation during meiosis. This is Meiosis-specific protein ASY3 from Arabidopsis thaliana (Mouse-ear cress).